The sequence spans 261 residues: Precorrin-6A reductase (261 aa).

It belongs to the precorrin-6x reductase family.

It carries out the reaction precorrin-6B + NADP(+) = precorrin-6A + NADPH + 2 H(+). Its pathway is cofactor biosynthesis; adenosylcobalamin biosynthesis; cob(II)yrinate a,c-diamide from precorrin-2 (aerobic route): step 6/10. Catalyzes the reduction of the macrocycle of precorrin-6X into precorrin-6Y. This is Precorrin-6A reductase (cobK) from Sinorhizobium sp.